Reading from the N-terminus, the 243-residue chain is LexA repressor 2 (243 aa).

Positions 48–68 (IREIGDAVGLTSTSSVAHQLR) form a DNA-binding region, H-T-H motif. Catalysis depends on for autocatalytic cleavage activity residues S167 and K204.

Belongs to the peptidase S24 family. As to quaternary structure, homodimer.

The catalysed reaction is Hydrolysis of Ala-|-Gly bond in repressor LexA.. Its function is as follows. Represses a number of genes involved in the response to DNA damage (SOS response), including recA and lexA. In the presence of single-stranded DNA, RecA interacts with LexA causing an autocatalytic cleavage which disrupts the DNA-binding part of LexA, leading to derepression of the SOS regulon and eventually DNA repair. In Nocardia farcinica (strain IFM 10152), this protein is LexA repressor 2.